The sequence spans 549 residues: Lysine-specific demethylase JMJ31 (549 aa).

The JmjC domain maps to 125-296; that stretch reads DYRPGQIYLA…SNMPEHMDSY (172 aa). Fe cation contacts are provided by His-184, Asp-186, and His-266.

The protein belongs to the JARID1 histone demethylase family. Requires Fe(2+) as cofactor. In terms of tissue distribution, mostly expressed in leaves and inflorescences, and, to a lower extent, in roots, siliques and stems.

Its subcellular location is the nucleus. May function as histone H3 lysine demethylase and be involved in regulation of gene expression. This is Lysine-specific demethylase JMJ31 from Arabidopsis thaliana (Mouse-ear cress).